The chain runs to 536 residues: Phosphoenolpyruvate carboxykinase (ATP) (536 aa).

Substrate is bound by residues R61, Y195, and K201. Residues K201, H220, and 236–244 (GLSGTGKTT) each bind ATP. Mn(2+) contacts are provided by K201 and H220. D257 is a binding site for Mn(2+). ATP contacts are provided by E285, R323, and T448. R323 is a binding site for substrate.

The protein belongs to the phosphoenolpyruvate carboxykinase (ATP) family. Mn(2+) is required as a cofactor.

The protein localises to the cytoplasm. The catalysed reaction is oxaloacetate + ATP = phosphoenolpyruvate + ADP + CO2. It participates in carbohydrate biosynthesis; gluconeogenesis. Functionally, involved in the gluconeogenesis. Catalyzes the conversion of oxaloacetate (OAA) to phosphoenolpyruvate (PEP) through direct phosphoryl transfer between the nucleoside triphosphate and OAA. This Methylobacterium nodulans (strain LMG 21967 / CNCM I-2342 / ORS 2060) protein is Phosphoenolpyruvate carboxykinase (ATP).